The sequence spans 316 residues: MSTVQVPKLNTKDLLTLEELTKEEIISLIEFAIHLKKNKQEPLLQGKILGLIFDKHSTRTRVSFEAGMVQLGGHGMFLSGKEMQMGRGETVSDTAKVLSQYIDGIMIRTFSHADVEELAKESSIPVINGLTDDHHPCQALADLMTIYEETNTFKGIKLAYVGDGNNVCHSLLLASAKVGMHMTVATPVGYEPNEEIVKKALAIAKETGAEIEVLHDPELAVNEADFIYTDVWMSMGQEGEEEKYTLFQPYQINKELVTHAKQTYRFLHCLPAHREEEVTGEIIDGPQSIVFEQAGNRLHAQKALLVSLFKSVEELS.

Carbamoyl phosphate contacts are provided by residues 57-60 (STRT), glutamine 84, arginine 108, and 135-138 (HPCQ). L-ornithine is bound by residues asparagine 166, aspartate 230, and 234–235 (SM). Carbamoyl phosphate contacts are provided by residues 269-270 (CL) and arginine 297.

It belongs to the aspartate/ornithine carbamoyltransferase superfamily. OTCase family.

The protein localises to the cytoplasm. The enzyme catalyses carbamoyl phosphate + L-ornithine = L-citrulline + phosphate + H(+). The protein operates within amino-acid biosynthesis; L-arginine biosynthesis; L-arginine from L-ornithine and carbamoyl phosphate: step 1/3. Reversibly catalyzes the transfer of the carbamoyl group from carbamoyl phosphate (CP) to the N(epsilon) atom of ornithine (ORN) to produce L-citrulline. The sequence is that of Ornithine carbamoyltransferase from Bacillus thuringiensis subsp. konkukian (strain 97-27).